A 435-amino-acid chain; its full sequence is Phosphomethylpyrimidine synthase (435 aa).

Substrate contacts are provided by residues asparagine 67, methionine 96, tyrosine 125, histidine 163, 185–187 (SRG), 226–229 (DGLR), and glutamate 265. Residue histidine 269 coordinates Zn(2+). Substrate is bound at residue tyrosine 292. Histidine 333 lines the Zn(2+) pocket. Positions 408, 411, and 415 each coordinate [4Fe-4S] cluster.

The protein belongs to the ThiC family. The cofactor is [4Fe-4S] cluster.

The catalysed reaction is 5-amino-1-(5-phospho-beta-D-ribosyl)imidazole + S-adenosyl-L-methionine = 4-amino-2-methyl-5-(phosphooxymethyl)pyrimidine + CO + 5'-deoxyadenosine + formate + L-methionine + 3 H(+). It participates in cofactor biosynthesis; thiamine diphosphate biosynthesis. Functionally, catalyzes the synthesis of the hydroxymethylpyrimidine phosphate (HMP-P) moiety of thiamine from aminoimidazole ribotide (AIR) in a radical S-adenosyl-L-methionine (SAM)-dependent reaction. This chain is Phosphomethylpyrimidine synthase, found in Thermus thermophilus (strain ATCC BAA-163 / DSM 7039 / HB27).